Reading from the N-terminus, the 229-residue chain is UPF0173 metal-dependent hydrolase SSP1060 (229 aa).

Belongs to the UPF0173 family.

This is UPF0173 metal-dependent hydrolase SSP1060 from Staphylococcus saprophyticus subsp. saprophyticus (strain ATCC 15305 / DSM 20229 / NCIMB 8711 / NCTC 7292 / S-41).